The chain runs to 391 residues: Argininosuccinate synthase (391 aa).

Residue 6–14 (AYSGGLDTT) participates in ATP binding. An L-citrulline-binding site is contributed by Tyr-84. Gly-114 is a binding site for ATP. L-aspartate-binding residues include Thr-116, Asn-120, and Asp-121. Residue Asn-120 coordinates L-citrulline. 5 residues coordinate L-citrulline: Arg-124, Ser-171, Ser-180, Glu-253, and Tyr-265.

It belongs to the argininosuccinate synthase family. Type 1 subfamily. Homotetramer.

It localises to the cytoplasm. The catalysed reaction is L-citrulline + L-aspartate + ATP = 2-(N(omega)-L-arginino)succinate + AMP + diphosphate + H(+). The protein operates within amino-acid biosynthesis; L-arginine biosynthesis; L-arginine from L-ornithine and carbamoyl phosphate: step 2/3. This Saccharolobus solfataricus (strain ATCC 35092 / DSM 1617 / JCM 11322 / P2) (Sulfolobus solfataricus) protein is Argininosuccinate synthase.